We begin with the raw amino-acid sequence, 111 residues long: UPF0060 membrane protein xcc-b100_1273 (111 aa).

The next 4 helical transmembrane spans lie at 8–28 (LLLF…PYLW), 34–54 (SVWL…LLTL), 62–82 (VYAA…WWVD), and 91–111 (LLGA…PRSG).

Belongs to the UPF0060 family.

It is found in the cell inner membrane. The polypeptide is UPF0060 membrane protein xcc-b100_1273 (Xanthomonas campestris pv. campestris (strain B100)).